A 311-amino-acid polypeptide reads, in one-letter code: Methionyl-tRNA formyltransferase (311 aa).

Position 109-112 (109-112) interacts with (6S)-5,6,7,8-tetrahydrofolate; it reads SLLP.

The protein belongs to the Fmt family.

It catalyses the reaction L-methionyl-tRNA(fMet) + (6R)-10-formyltetrahydrofolate = N-formyl-L-methionyl-tRNA(fMet) + (6S)-5,6,7,8-tetrahydrofolate + H(+). Its function is as follows. Attaches a formyl group to the free amino group of methionyl-tRNA(fMet). The formyl group appears to play a dual role in the initiator identity of N-formylmethionyl-tRNA by promoting its recognition by IF2 and preventing the misappropriation of this tRNA by the elongation apparatus. This chain is Methionyl-tRNA formyltransferase, found in Marinobacter nauticus (strain ATCC 700491 / DSM 11845 / VT8) (Marinobacter aquaeolei).